A 223-amino-acid chain; its full sequence is Killer cell lectin-like receptor subfamily B member 1B allele A (223 aa).

Residues 1-43 (MDSTTLVYADLNLARIQEPKHDSPPSLSPDTCRCPRWHRLALK) are Cytoplasmic-facing. Positions 6-11 (LVYADL) match the ITIM motif motif. Residues 32–35 (CRCP) carry the LCK-binding motif motif. The helical; Signal-anchor for type II membrane protein transmembrane segment at 44–63 (FGCAGLILLVLVVIGLCVLV) threads the bilayer. Over 64–223 (LSVQKSSVQK…LNHETPSNDS (160 aa)) the chain is Extracellular. One can recognise a C-type lectin domain in the interval 93-212 (ECPQDWLSHR…STDNRWICQK (120 aa)). Intrachain disulfides connect Cys-122/Cys-210 and Cys-189/Cys-202.

In terms of assembly, homodimer; disulfide-linked. Interacts with tyrosine kinase LCK. Binds PTPN6/SHP-1 in a phosphorylation-dependent manner. In terms of tissue distribution, expressed in NK cells and a subset of T-cells.

It is found in the membrane. Its function is as follows. Receptor for CLEC2D/OCIL. Ligand-binding contributes to inhibition of cytotoxic natural killer (NK) cells. May mediate MHC class I-independent 'missing-self' recognition of allografts, tumor cells and virus-infected cells. This chain is Killer cell lectin-like receptor subfamily B member 1B allele A (Klrb1b), found in Mus musculus (Mouse).